The following is a 106-amino-acid chain: Ferredoxin (106 aa).

[3Fe-4S] cluster is bound by residues Cys9 and Cys17. Positions 21, 40, 43, and 46 each coordinate [4Fe-4S] cluster. The region spanning 31–60 (RMLYIHPDECVDCGACEPVCPVEAIYYEDD) is the 4Fe-4S ferredoxin-type domain. A [3Fe-4S] cluster-binding site is contributed by Cys50. The disordered stretch occupies residues 84–106 (GAAKVGKVDRDVEPVSSLPPQGE).

[4Fe-4S] cluster serves as cofactor. Requires [3Fe-4S] cluster as cofactor.

In terms of biological role, ferredoxins are iron-sulfur proteins that transfer electrons in a wide variety of metabolic reactions. The sequence is that of Ferredoxin (fdxA) from Saccharopolyspora erythraea (Streptomyces erythraeus).